Reading from the N-terminus, the 202-residue chain is N-(5'-phosphoribosyl)anthranilate isomerase (202 aa).

It belongs to the TrpF family.

The enzyme catalyses N-(5-phospho-beta-D-ribosyl)anthranilate = 1-(2-carboxyphenylamino)-1-deoxy-D-ribulose 5-phosphate. It functions in the pathway amino-acid biosynthesis; L-tryptophan biosynthesis; L-tryptophan from chorismate: step 3/5. This is N-(5'-phosphoribosyl)anthranilate isomerase from Listeria monocytogenes serotype 4b (strain CLIP80459).